A 111-amino-acid polypeptide reads, in one-letter code: Disintegrin acostatin-alpha (111 aa).

Positions 1 to 20 are cleaved as a signal peptide; sequence MIQVLLVTLCLAVFPYQGSS. Positions 21–46 are excised as a propeptide; it reads IILESGNVNDYEVVYPRKVTALPKGA. One can recognise a Disintegrin domain in the interval 47-111; sequence IQPKNPCCDA…GDCPRKHFYA (65 aa). At Q48 the chain carries Pyrrolidone carboxylic acid; in Disintegrin acostatin-alpha, processed form. 4 disulfide bridges follow: C53–C76, C67–C73, C72–C97, and C85–C104. Positions 89–91 match the Cell attachment site motif; that stretch reads RGD. A propeptide spanning residues 110-111 is cleaved from the precursor; it reads YA.

This sequence belongs to the disintegrin family. Dimeric disintegrin subfamily. In terms of assembly, heterodimer with subunit beta; disulfide-linked. In terms of tissue distribution, expressed by the venom gland.

It localises to the secreted. Inhibits fibrinogen interaction with platelets. Acts by binding to alpha-IIb/beta-3 (ITGA2B/ITGB3) on the platelet surface and inhibits ADP-induced platelet aggregation in human platelet-rich plasma. This is Disintegrin acostatin-alpha from Agkistrodon contortrix contortrix (Southern copperhead).